Here is a 339-residue protein sequence, read N- to C-terminus: MKDSLVLLGRVPAHPDSRCWFLAWNPAGTLLASCGGDRRIRIWGTEGDSWICKSVLSEGHQRTVRKVAWSPCGNYLASASFDATTCIWKKNQDDFECVTTLEGHENEVKSVAWAPSGNLLATCSRDKSVWVWEVDEEDEYECVSVLNSHTQDVKHVVWHPSQELLASASYDDTVKLYREEEDDWVCCATLEGHESTVWSLAFDPSGQRLASCSDDRTVRIWRQYLPGNEQGVACSGSDPSWKCICTLSGFHSRTIYDIAWCQLTGALATACGDDAIRVFQEDPNSDPQQPTFSLTAHLHQAHSQDVNCVAWNPKEPGLLASCSDDGEVAFWKYQRPEGL.

WD repeat units follow at residues 14–53, 59–98, 103–142, 148–187, 192–231, 250–289, and 301–339; these read HPDSRCWFLAWNPAGTLLASCGGDRRIRIWGTEGDSWICK, GHQRTVRKVAWSPCGNYLASASFDATTCIWKKNQDDFECV, GHENEVKSVAWAPSGNLLATCSRDKSVWVWEVDEEDEYEC, SHTQDVKHVVWHPSQELLASASYDDTVKLYREEEDDWVCC, GHESTVWSLAFDPSGQRLASCSDDRTVRIWRQYLPGNEQG, FHSRTIYDIAWCQLTGALATACGDDAIRVFQEDPNSDPQQ, and AHSQDVNCVAWNPKEPGLLASCSDDGEVAFWKYQRPEGL. The LYR motif; required for interaction with HSC20 signature appears at 176-178; it reads LYR.

This sequence belongs to the WD repeat CIA1 family. Component of the CIA complex. Interacts with CIAO2A and forms a complex with CIAO2B and MMS19; the interactions with CIAO2A and CIAO2B are mutually exclusive. Interacts with CHD1L, ERCC2, IREB2 and POLD1. Component of the MMXD complex, which includes CIAO1, ERCC2, CIAO2B, MMS19 and SLC25A5. Interacts with WT1. Interacts with CIAO3. Interacts (via LYR motif) with HSC20.

The protein localises to the cytoplasm. In terms of biological role, key component of the cytosolic iron-sulfur protein assembly (CIA) complex, a multiprotein complex that mediates the incorporation of iron-sulfur cluster into extramitochondrial Fe/S proteins. As a CIA complex component, interacts specifically with CIAO2A or CIAO2B and MMS19 to assist different branches of iron-sulfur protein assembly, depending of its interactors. The complex CIAO1:CIAO2B:MMS19 binds to and facilitates the assembly of most cytosolic-nuclear Fe/S proteins. CIAO1:CIAO2A specifically matures ACO1 and stabilizes IREB2. Seems to specifically modulate the transactivation activity of WT1. As part of the mitotic spindle-associated MMXD complex it may play a role in chromosome segregation. This chain is Probable cytosolic iron-sulfur protein assembly protein CIAO1, found in Homo sapiens (Human).